The primary structure comprises 288 residues: Nucleotide-binding protein Gura_2968 (288 aa).

Residue 8 to 15 (GLSGSGKS) participates in ATP binding. 59 to 62 (DIRG) provides a ligand contact to GTP.

This sequence belongs to the RapZ-like family.

Its function is as follows. Displays ATPase and GTPase activities. The sequence is that of Nucleotide-binding protein Gura_2968 from Geotalea uraniireducens (strain Rf4) (Geobacter uraniireducens).